We begin with the raw amino-acid sequence, 186 residues long: Ribosome-recycling factor (186 aa).

The segment at Asp-135–Met-164 is disordered.

Belongs to the RRF family.

It localises to the cytoplasm. Responsible for the release of ribosomes from messenger RNA at the termination of protein biosynthesis. May increase the efficiency of translation by recycling ribosomes from one round of translation to another. The chain is Ribosome-recycling factor from Sinorhizobium medicae (strain WSM419) (Ensifer medicae).